A 138-amino-acid polypeptide reads, in one-letter code: Oleosin G (138 aa).

3 consecutive transmembrane segments (helical) span residues 14–34, 48–68, and 69–89; these read ILGF…TGLT, VLIF…VAVA, and GFLS…WLYN. The Proline-knot signature appears at 47–58; sequence PVLIFFSPILIP.

Belongs to the oleosin family. In terms of tissue distribution, expressed in megagametophytes (at protein level).

It is found in the lipid droplet. It localises to the membrane. The sequence is that of Oleosin G from Pinus massoniana (Chinese red pine).